A 465-amino-acid polypeptide reads, in one-letter code: Triplex capsid protein 1 (465 aa).

It belongs to the herpesviridae TRX1 protein family. In terms of assembly, interacts with TRX2, MCP and capsid vertex component 2/CVC2.

Its subcellular location is the virion. The protein localises to the host nucleus. Its function is as follows. Structural component of the T=16 icosahedral capsid. The capsid is composed of pentamers and hexamers of major capsid protein/MCP, which are linked together by heterotrimers called triplexes. These triplexes are formed by a single molecule of triplex protein 1/TRX1 and two copies of triplex protein 2/TRX2. Additionally, TRX1 is required for efficient transport of TRX2 to the nucleus, which is the site of capsid assembly. The sequence is that of Triplex capsid protein 1 from Equus caballus (Horse).